Consider the following 153-residue polypeptide: MSITHQPANLTLAQIQQMIGGVMLLSQHSPLHRRYVVAEWLQRILPAFELNQFCYYEDEHGRPIAFCNWAFVSEQIRDELLSGVREISPSDWRSGQQIYIPEMIAPFGHGREVVNDLRRRVFLPWQGQKVCTVRGKVDAQNDRCIRKVQWFSI.

Histidine 32 is a catalytic residue.

The protein belongs to the RTX toxin acyltransferase family.

Its subcellular location is the cytoplasm. It carries out the reaction a fatty acyl-[ACP] + L-lysyl-[protein] = N(6)-(fatty acyl)-L-lysyl-[protein] + holo-[ACP] + H(+). In terms of biological role, catalyzes fatty acylation of the protoxin (RtxA) at internal lysine residues, thereby converting it to the active toxin. The sequence is that of Lysine-acyltransferase RtxC (rtxC) from Vibrio cholerae serotype O1 (strain ATCC 39315 / El Tor Inaba N16961).